The sequence spans 20 residues: Short cationic peptide-4c (20 aa).

Glu20 is subject to Glutamic acid 1-amide.

As to expression, expressed by the venom gland.

Its subcellular location is the secreted. This Cupiennius salei (American wandering spider) protein is Short cationic peptide-4c.